The primary structure comprises 100 residues: Large ribosomal subunit protein uL23 (100 aa).

Belongs to the universal ribosomal protein uL23 family. Part of the 50S ribosomal subunit. Contacts protein L29, and trigger factor when it is bound to the ribosome.

In terms of biological role, one of the early assembly proteins it binds 23S rRNA. One of the proteins that surrounds the polypeptide exit tunnel on the outside of the ribosome. Forms the main docking site for trigger factor binding to the ribosome. This chain is Large ribosomal subunit protein uL23, found in Mycobacteroides abscessus (strain ATCC 19977 / DSM 44196 / CCUG 20993 / CIP 104536 / JCM 13569 / NCTC 13031 / TMC 1543 / L948) (Mycobacterium abscessus).